We begin with the raw amino-acid sequence, 94 residues long: Large ribosomal subunit protein bL27 (94 aa).

A propeptide spanning residues 1-9 is cleaved from the precursor; that stretch reads MLKLNLQFF.

Belongs to the bacterial ribosomal protein bL27 family. The N-terminus is cleaved by ribosomal processing cysteine protease Prp.

The protein is Large ribosomal subunit protein bL27 of Staphylococcus aureus (strain Mu3 / ATCC 700698).